The following is a 151-amino-acid chain: Protein A151R (151 aa).

This sequence belongs to the asfivirus A151R family. In terms of assembly, monomer. Homodimer. Interacts with protein B119L. Interacts with membrane protein E248R. Zn(2+) is required as a cofactor.

In terms of biological role, may participate in a redox cascade for the formation of disulfide bonds in viral proteins. This is Protein A151R from Ornithodoros (relapsing fever ticks).